Here is a 665-residue protein sequence, read N- to C-terminus: MVDVLAHESELLGLVKEYLDFAEFEDTLKTFLKECKIKGKPLSKSTCGSLRDPKSLKFQRDLLAAFDSGDQKVFFRLWEEHIPRPIRDGDSLAQKLEFYLHIHFAIYLLKHSAGRPDKEDLDERISYFKTFLETKGAALSQTTEFLPFYALPFVPNPMAHPSFKELFQDSWTSELKLKLEKFLALMFKASNTPKLLTLYKENGQSNKDVLQQLHQQLVEAERRSMTYLKRYNRIQADYHNLIGVTAELVDSLEATVSGKMITPEYLQSVCVRLFSNQMRQSLAHSVDFTRPGTASTMLRASLAPVKLKDVPLLPSLDYEKLKKDLILGSDRLKAFLLQALRWRLTTSHPGEQRETVLQAYISNDLLDCHSHSQRSVLQLLQSKSEVVRQYTARLINAFASLAEGRRYLAQSTKVLRMLEERLKEEDKDVITRENVLGALQKFSLRRPLQTAMIQDGLIFWLIDILKEPDCLSDYTLEYSVALLMNLCLRSAGKNMCAKVAGLVLKVLSDLLGHENHEIQPYVNGALYSILSIPSIREEARAMGMEDILRCFIKEGNAEMIRQIEFIIKQLNAEELLDGVLESDDDEDEDDEEDHDTMEADLDKDELIQPQLGELSGEKLLTTEYLGIMTNTGKARRRGTAGVQWGGPEPLRRPVTPGGHRTGYPA.

The LisH domain maps to 7 to 39; sequence HESELLGLVKEYLDFAEFEDTLKTFLKECKIKG. The stretch at 204–235 forms a coiled coil; the sequence is QSNKDVLQQLHQQLVEAERRSMTYLKRYNRIQ. A Phosphoserine modification is found at Ser-582. A compositionally biased stretch (acidic residues) spans 582–603; that stretch reads SDDDEDEDDEEDHDTMEADLDK. Disordered stretches follow at residues 582 to 604 and 636 to 665; these read SDDD…LDKD and RRGT…GYPA.

As to quaternary structure, interacts with TOGARAM1, CCDC66, CEP104, CSPP1 and CEP290. Interacts with NDUFAF2.

Its subcellular location is the cytoplasm. The protein resides in the cytoskeleton. It localises to the cilium basal body. The protein localises to the cell projection. It is found in the cilium. Its subcellular location is the microtubule organizing center. The protein resides in the centrosome. It localises to the centriole. Its function is as follows. Involved in ciliogenesis. It is required for appropriate acetylation and polyglutamylation of ciliary microtubules, and regulation of cilium length. Acts as a positive regulator of hedgehog (Hh)signaling. May participate in the trafficking and/or retention of GLI2 and GLI3 proteins at the ciliary tip. This Bos taurus (Bovine) protein is LisH domain-containing protein ARMC9 (ARMC9).